A 232-amino-acid chain; its full sequence is Probable transcriptional regulatory protein Bd1964 (232 aa).

Belongs to the TACO1 family.

It is found in the cytoplasm. The chain is Probable transcriptional regulatory protein Bd1964 from Bdellovibrio bacteriovorus (strain ATCC 15356 / DSM 50701 / NCIMB 9529 / HD100).